The chain runs to 129 residues: Protein yippee-like (129 aa).

The Yippee domain occupies 12–109 (KIYSCKHCGT…LERFKITGPD (98 aa)). Zn(2+) contacts are provided by C16, C19, C72, and C75.

Belongs to the yippee family.

This is Protein yippee-like from Solanum tuberosum (Potato).